The primary structure comprises 174 residues: Mytilin-3 (174 aa).

A signal peptide spans 1-16 (MLKGIILIVTIQLVNA).

As to expression, component of the organic matrix of calcified shell layers like nacre and prisms.

It is found in the secreted. The protein is Mytilin-3 of Mytilus californianus (California mussel).